We begin with the raw amino-acid sequence, 273 residues long: 3-methyl-2-oxobutanoate hydroxymethyltransferase (273 aa).

Mg(2+) contacts are provided by Asp-53 and Asp-92. Residues 53 to 54, Asp-92, and Lys-120 contribute to the 3-methyl-2-oxobutanoate site; that span reads DS. Glu-122 contributes to the Mg(2+) binding site. Glu-189 acts as the Proton acceptor in catalysis.

This sequence belongs to the PanB family. Homodecamer; pentamer of dimers. The cofactor is Mg(2+).

The protein resides in the cytoplasm. It catalyses the reaction 3-methyl-2-oxobutanoate + (6R)-5,10-methylene-5,6,7,8-tetrahydrofolate + H2O = 2-dehydropantoate + (6S)-5,6,7,8-tetrahydrofolate. Its pathway is cofactor biosynthesis; (R)-pantothenate biosynthesis; (R)-pantoate from 3-methyl-2-oxobutanoate: step 1/2. In terms of biological role, catalyzes the reversible reaction in which hydroxymethyl group from 5,10-methylenetetrahydrofolate is transferred onto alpha-ketoisovalerate to form ketopantoate. The sequence is that of 3-methyl-2-oxobutanoate hydroxymethyltransferase from Cupriavidus pinatubonensis (strain JMP 134 / LMG 1197) (Cupriavidus necator (strain JMP 134)).